We begin with the raw amino-acid sequence, 270 residues long: B3 domain-containing protein Os03g0212300 (270 aa).

2 DNA-binding regions (TF-B3) span residues 13-110 (FEFF…FDET) and 158-265 (VTLR…RKAD).

Its subcellular location is the nucleus. This chain is B3 domain-containing protein Os03g0212300, found in Oryza sativa subsp. japonica (Rice).